The following is a 513-amino-acid chain: Activin receptor type-2A (513 aa).

The signal sequence occupies residues 1 to 19 (MGAAAKLAFAVFLISCSSG). Residues 20–135 (AILGRSETQE…TSNPVTPKPP (116 aa)) lie on the Extracellular side of the membrane. Disulfide bonds link C30/C60, C50/C78, C85/C104, C91/C103, and C105/C110. N-linked (GlcNAc...) asparagine glycosylation is found at N43 and N66. Residues 136-161 (YYNILLYSLVPLMLIAGIVICAFWVY) traverse the membrane as a helical segment. Residues 162–513 (RHHKMAYPPV…VDFPPKESSL (352 aa)) lie on the Cytoplasmic side of the membrane. The 294-residue stretch at 192–485 (LQLLEVKARG…GERITQMQRL (294 aa)) folds into the Protein kinase domain. ATP is bound by residues 198–206 (KARGRFGCV) and K219. D322 functions as the Proton acceptor in the catalytic mechanism.

It belongs to the protein kinase superfamily. TKL Ser/Thr protein kinase family. TGFB receptor subfamily. As to quaternary structure, part of a complex consisting of MAGI2/ARIP1, ACVR2A, ACVR1B and SMAD3. Interacts with MAGI2/ARIP1. Interacts with type I receptor ACVR1. Interacts with BMP7. Interacts with TSC22D1/TSC-22. Interacts with activin A/INHBA. The cofactor is Mg(2+). It depends on Mn(2+) as a cofactor. In terms of tissue distribution, brain, testis, intestine, liver and kidney.

It localises to the cell membrane. It carries out the reaction L-threonyl-[receptor-protein] + ATP = O-phospho-L-threonyl-[receptor-protein] + ADP + H(+). The enzyme catalyses L-seryl-[receptor-protein] + ATP = O-phospho-L-seryl-[receptor-protein] + ADP + H(+). Its function is as follows. On ligand binding, forms a receptor complex consisting of two type II and two type I transmembrane serine/threonine kinases. Type II receptors phosphorylate and activate type I receptors which autophosphorylate, then bind and activate SMAD transcriptional regulators. Receptor for activin A, activin B and inhibin A. Mediates induction of adipogenesis by GDF6. This is Activin receptor type-2A from Mus musculus (Mouse).